The chain runs to 158 residues: Cyclic pyranopterin monophosphate synthase (158 aa).

Residues 76 to 78 (LCH) and 114 to 115 (ME) contribute to the substrate site. Asp129 is an active-site residue.

Belongs to the MoaC family. Homohexamer; trimer of dimers.

The enzyme catalyses (8S)-3',8-cyclo-7,8-dihydroguanosine 5'-triphosphate = cyclic pyranopterin phosphate + diphosphate. It participates in cofactor biosynthesis; molybdopterin biosynthesis. Catalyzes the conversion of (8S)-3',8-cyclo-7,8-dihydroguanosine 5'-triphosphate to cyclic pyranopterin monophosphate (cPMP). The chain is Cyclic pyranopterin monophosphate synthase from Shewanella baltica (strain OS155 / ATCC BAA-1091).